The chain runs to 191 residues: Neuronal calcium sensor 1 (191 aa).

Residue Gly-2 is the site of N-myristoyl glycine attachment. EF-hand domains lie at Glu-24–Gly-59, Asp-60–Gly-95, Thr-96–Met-131, and Thr-144–Ile-179. Residues Asp-73, Asn-75, Asp-77, Glu-84, Asp-109, Asp-111, Asp-113, Glu-120, Asp-157, Asn-159, Asp-161, Lys-163, and Glu-168 each contribute to the Ca(2+) site.

Belongs to the recoverin family.

Its function is as follows. Neuronal calcium sensor, regulator of G protein-coupled receptor phosphorylation in a calcium dependent manner. Regulates neurite extension and branching by activity-dependent (Ca2+) influx in growth cones. In Aplysia californica (California sea hare), this protein is Neuronal calcium sensor 1.